We begin with the raw amino-acid sequence, 144 residues long: Granulocyte-macrophage colony-stimulating factor (144 aa).

The first 17 residues, 1-17, serve as a signal peptide directing secretion; it reads MWLQNLLFLGIVVYSFS. An O-linked (GalNAc...) serine glycan is attached at serine 22. Threonine 27 carries O-linked (GalNAc...) threonine glycosylation. 2 cysteine pairs are disulfide-bonded: cysteine 71-cysteine 113 and cysteine 105-cysteine 138. An N-linked (GlcNAc...) asparagine glycan is attached at asparagine 86.

This sequence belongs to the GM-CSF family. As to quaternary structure, monomer. The signaling GM-CSF receptor complex is a dodecamer of two head-to-head hexamers of two alpha, two beta, and two ligand subunits.

It localises to the secreted. Cytokine that stimulates the growth and differentiation of hematopoietic precursor cells from various lineages, including granulocytes, macrophages, eosinophils and erythrocytes. This Rattus norvegicus (Rat) protein is Granulocyte-macrophage colony-stimulating factor (Csf2).